Consider the following 270-residue polypeptide: D-aminoacyl-tRNA deacylase (270 aa).

Belongs to the DtdA deacylase family. In terms of assembly, monomer. Zn(2+) serves as cofactor.

It carries out the reaction a D-aminoacyl-tRNA + H2O = a tRNA + a D-alpha-amino acid + H(+). It catalyses the reaction glycyl-tRNA(Ala) + H2O = tRNA(Ala) + glycine + H(+). In terms of biological role, D-aminoacyl-tRNA deacylase with broad substrate specificity. By recycling D-aminoacyl-tRNA to D-amino acids and free tRNA molecules, this enzyme counteracts the toxicity associated with the formation of D-aminoacyl-tRNA entities in vivo. The protein is D-aminoacyl-tRNA deacylase of Pyrococcus furiosus (strain ATCC 43587 / DSM 3638 / JCM 8422 / Vc1).